A 145-amino-acid chain; its full sequence is Deoxyuridine 5'-triphosphate nucleotidohydrolase (145 aa).

Residues 62–64, Asn75, and 79–81 each bind substrate; these read RSG and TVD.

The protein belongs to the dUTPase family. It depends on Mg(2+) as a cofactor.

The enzyme catalyses dUTP + H2O = dUMP + diphosphate + H(+). Its pathway is pyrimidine metabolism; dUMP biosynthesis; dUMP from dCTP (dUTP route): step 2/2. Functionally, this enzyme is involved in nucleotide metabolism: it produces dUMP, the immediate precursor of thymidine nucleotides and it decreases the intracellular concentration of dUTP so that uracil cannot be incorporated into DNA. The sequence is that of Deoxyuridine 5'-triphosphate nucleotidohydrolase from Gloeothece citriformis (strain PCC 7424) (Cyanothece sp. (strain PCC 7424)).